Here is a 352-residue protein sequence, read N- to C-terminus: Histidine biosynthesis bifunctional protein HisB (352 aa).

The interval 1–163 is histidinol-phosphatase; the sequence is MKKILFIDRD…MVASAIINDA (163 aa). The Nucleophile role is filled by aspartate 8. The Mg(2+) site is built by aspartate 8 and aspartate 10. Aspartate 10 functions as the Proton donor in the catalytic mechanism. Residues cysteine 91, histidine 93, cysteine 99, and cysteine 101 each coordinate Zn(2+). Residue aspartate 128 participates in Mg(2+) binding. Residues 164 to 352 form an imidazoleglycerol-phosphate dehydratase region; sequence RKASVQRKTK…NYLPSTKGVL (189 aa).

This sequence in the N-terminal section; belongs to the histidinol-phosphatase family. It in the C-terminal section; belongs to the imidazoleglycerol-phosphate dehydratase family. The cofactor is Mg(2+). Zn(2+) is required as a cofactor.

It localises to the cytoplasm. It catalyses the reaction D-erythro-1-(imidazol-4-yl)glycerol 3-phosphate = 3-(imidazol-4-yl)-2-oxopropyl phosphate + H2O. The enzyme catalyses L-histidinol phosphate + H2O = L-histidinol + phosphate. It participates in amino-acid biosynthesis; L-histidine biosynthesis; L-histidine from 5-phospho-alpha-D-ribose 1-diphosphate: step 6/9. Its pathway is amino-acid biosynthesis; L-histidine biosynthesis; L-histidine from 5-phospho-alpha-D-ribose 1-diphosphate: step 8/9. This chain is Histidine biosynthesis bifunctional protein HisB, found in Legionella pneumophila subsp. pneumophila (strain Philadelphia 1 / ATCC 33152 / DSM 7513).